The following is a 298-amino-acid chain: Lipoyl synthase (298 aa).

Cysteine 40, cysteine 45, cysteine 51, cysteine 67, cysteine 71, cysteine 74, and serine 280 together coordinate [4Fe-4S] cluster. Residues alanine 53–serine 269 form the Radical SAM core domain.

Belongs to the radical SAM superfamily. Lipoyl synthase family. [4Fe-4S] cluster serves as cofactor.

The protein localises to the cytoplasm. The catalysed reaction is [[Fe-S] cluster scaffold protein carrying a second [4Fe-4S](2+) cluster] + N(6)-octanoyl-L-lysyl-[protein] + 2 oxidized [2Fe-2S]-[ferredoxin] + 2 S-adenosyl-L-methionine + 4 H(+) = [[Fe-S] cluster scaffold protein] + N(6)-[(R)-dihydrolipoyl]-L-lysyl-[protein] + 4 Fe(3+) + 2 hydrogen sulfide + 2 5'-deoxyadenosine + 2 L-methionine + 2 reduced [2Fe-2S]-[ferredoxin]. It participates in protein modification; protein lipoylation via endogenous pathway; protein N(6)-(lipoyl)lysine from octanoyl-[acyl-carrier-protein]. In terms of biological role, catalyzes the radical-mediated insertion of two sulfur atoms into the C-6 and C-8 positions of the octanoyl moiety bound to the lipoyl domains of lipoate-dependent enzymes, thereby converting the octanoylated domains into lipoylated derivatives. This Bacillus subtilis (strain 168) protein is Lipoyl synthase.